A 300-amino-acid polypeptide reads, in one-letter code: MEFGRLITAMVTPFNDRLEVDYVRAAELANHLVNTGSDGIVVAGTTGESPTLTKDEKIRLFSTVVDAVGDRASVIAGTGSYDTEATIELSRKAKEAGVDGLLLVGPYYNKPPQEGYYQHFAAVAKAVPLPIMLYNIPGRTGSNIIPATVARLMAFDNIVAIKEAAGSMDQVSEVVRLARPDFKVYSGDDSLTLPILSVGGHGIVSVASHLVGKEIQKMIAACINGNISEAARIHRELYPLFKGLFITSNPICVKAALNLLGRPVGGVRLPLVEANDQEVAAMRQLIESYGLDASCQETVA.

Pyruvate is bound at residue Thr-46. Residue Tyr-134 is the Proton donor/acceptor of the active site. The active-site Schiff-base intermediate with substrate is Lys-162. Val-204 is a binding site for pyruvate.

Belongs to the DapA family. As to quaternary structure, homotetramer; dimer of dimers.

It localises to the cytoplasm. The enzyme catalyses L-aspartate 4-semialdehyde + pyruvate = (2S,4S)-4-hydroxy-2,3,4,5-tetrahydrodipicolinate + H2O + H(+). Its pathway is amino-acid biosynthesis; L-lysine biosynthesis via DAP pathway; (S)-tetrahydrodipicolinate from L-aspartate: step 3/4. Functionally, catalyzes the condensation of (S)-aspartate-beta-semialdehyde [(S)-ASA] and pyruvate to 4-hydroxy-tetrahydrodipicolinate (HTPA). The chain is 4-hydroxy-tetrahydrodipicolinate synthase from Heliobacterium modesticaldum (strain ATCC 51547 / Ice1).